The following is a 512-amino-acid chain: ATP synthase subunit alpha (512 aa).

ATP is bound at residue 169 to 176 (GDRQTGKT).

This sequence belongs to the ATPase alpha/beta chains family. F-type ATPases have 2 components, CF(1) - the catalytic core - and CF(0) - the membrane proton channel. CF(1) has five subunits: alpha(3), beta(3), gamma(1), delta(1), epsilon(1). CF(0) has three main subunits: a(1), b(2) and c(9-12). The alpha and beta chains form an alternating ring which encloses part of the gamma chain. CF(1) is attached to CF(0) by a central stalk formed by the gamma and epsilon chains, while a peripheral stalk is formed by the delta and b chains.

The protein resides in the cell membrane. The enzyme catalyses ATP + H2O + 4 H(+)(in) = ADP + phosphate + 5 H(+)(out). Functionally, produces ATP from ADP in the presence of a proton gradient across the membrane. The alpha chain is a regulatory subunit. This is ATP synthase subunit alpha from Buchnera aphidicola subsp. Acyrthosiphon pisum (strain 5A).